The sequence spans 529 residues: Peptide chain release factor 3 (529 aa).

One can recognise a tr-type G domain in the interval 11-280 (AKRRTFAIIS…GLVEWAPAPM (270 aa)). Residues 20–27 (SHPDAGKT), 88–92 (DTPGH), and 142–145 (NKLD) each bind GTP.

This sequence belongs to the TRAFAC class translation factor GTPase superfamily. Classic translation factor GTPase family. PrfC subfamily.

It localises to the cytoplasm. Increases the formation of ribosomal termination complexes and stimulates activities of RF-1 and RF-2. It binds guanine nucleotides and has strong preference for UGA stop codons. It may interact directly with the ribosome. The stimulation of RF-1 and RF-2 is significantly reduced by GTP and GDP, but not by GMP. This Salmonella arizonae (strain ATCC BAA-731 / CDC346-86 / RSK2980) protein is Peptide chain release factor 3.